The primary structure comprises 147 residues: RecQ-mediated genome instability protein 2 (147 aa).

The segment at 1–20 is disordered; sequence MAAAADSFSGGPAGVRLPRS. The residue at position 2 (Ala2) is an N-acetylalanine. Ser7 is subject to Phosphoserine. The segment at residues 44 to 114 is a DNA-binding region (OB); the sequence is SRAAAGRGPL…MGVVQACSPE (71 aa).

It belongs to the RMI2 family. Component of the RMI complex, containing at least TOP3A, RMI1 and RMI2. The RMI complex interacts with BLM. In terms of processing, phosphorylated during mitosis.

The protein localises to the nucleus. Its function is as follows. Essential component of the RMI complex, a complex that plays an important role in the processing of homologous recombination intermediates. It is required to regulate sister chromatid segregation and to limit DNA crossover. Essential for the stability, localization, and function of BLM, TOP3A, and complexes containing BLM. In the RMI complex, it is required to target BLM to chromatin and stress-induced nuclear foci and mitotic phosphorylation of BLM. The sequence is that of RecQ-mediated genome instability protein 2 (RMI2) from Homo sapiens (Human).